A 96-amino-acid chain; its full sequence is Small ribosomal subunit protein bS18 (96 aa).

Belongs to the bacterial ribosomal protein bS18 family. Part of the 30S ribosomal subunit. Forms a tight heterodimer with protein bS6.

In terms of biological role, binds as a heterodimer with protein bS6 to the central domain of the 16S rRNA, where it helps stabilize the platform of the 30S subunit. This Borreliella afzelii (strain PKo) (Borrelia afzelii) protein is Small ribosomal subunit protein bS18.